The sequence spans 513 residues: Probable WRKY transcription factor 3 (513 aa).

Positions 1-11 (MAEKEEKEPSK) are enriched in basic and acidic residues. Disordered stretches follow at residues 1–26 (MAEKEEKEPSKLKSSTGVSRPTISLP), 175–281 (NVHM…PACP), and 297–394 (IIYK…VASS). Over residues 179 to 201 (QQSQQSEYPSSTQQQQQQQQQAS) the composition is skewed to low complexity. The span at 202 to 228 (LTEIPSFSSAPRSQIRASVQETSQGQR) shows a compositional bias: polar residues. Residues 229–240 (ETSEISVFEHRS) are compositionally biased toward basic and acidic residues. The segment at residues 244-308 (NADKPADDGY…YKGQHNHELP (65 aa)) is a DNA-binding region (WRKY 1). 2 stretches are compositionally biased toward polar residues: residues 311 to 335 (RGNNNGSCKSSDIANQFQTSNSSLN) and 343 to 355 (TSQVTTTEQMSEA). Residues 368 to 387 (VGERHEDEPDPKRRNTEVRV) are compositionally biased toward basic and acidic residues. Residues 409–474 (SEVDLLDDGY…YEGKHNHDVP (66 aa)) constitute a DNA-binding region (WRKY 2).

In young, mature and senescent leaves.

It is found in the nucleus. Its function is as follows. Transcription factor. Interacts specifically with the W box (5'-(T)TGAC[CT]-3'), a frequently occurring elicitor-responsive cis-acting element. In Arabidopsis thaliana (Mouse-ear cress), this protein is Probable WRKY transcription factor 3 (WRKY3).